Consider the following 61-residue polypeptide: Small ribosomal subunit protein uS14 (61 aa).

Cys-24, Cys-27, Cys-40, and Cys-43 together coordinate Zn(2+).

The protein belongs to the universal ribosomal protein uS14 family. Zinc-binding uS14 subfamily. As to quaternary structure, part of the 30S ribosomal subunit. Contacts proteins S3 and S10. Zn(2+) serves as cofactor.

In terms of biological role, binds 16S rRNA, required for the assembly of 30S particles and may also be responsible for determining the conformation of the 16S rRNA at the A site. This chain is Small ribosomal subunit protein uS14, found in Desulfotalea psychrophila (strain LSv54 / DSM 12343).